Reading from the N-terminus, the 877-residue chain is DNA polymerase I (877 aa).

The 5'-3' exonuclease domain occupies Thr-180–Lys-272. One can recognise a 3'-5' exonuclease domain in the interval Phe-312–Ile-468.

The protein belongs to the DNA polymerase type-A family. As to quaternary structure, single-chain monomer with multiple functions.

The enzyme catalyses DNA(n) + a 2'-deoxyribonucleoside 5'-triphosphate = DNA(n+1) + diphosphate. Functionally, in addition to polymerase activity, this DNA polymerase exhibits 3'-5' and 5'-3' exonuclease activity. In Lactococcus lactis subsp. cremoris (strain MG1363), this protein is DNA polymerase I (polA).